The chain runs to 96 residues: DNA-binding protein Saci_1468 (96 aa).

It belongs to the PDCD5 family.

The protein is DNA-binding protein Saci_1468 of Sulfolobus acidocaldarius (strain ATCC 33909 / DSM 639 / JCM 8929 / NBRC 15157 / NCIMB 11770).